A 228-amino-acid polypeptide reads, in one-letter code: E3 ubiquitin-protein ligase RNF114 (228 aa).

The RING-type zinc finger occupies 29–68; it reads CPVCLEVYEKPVQVPCGHVFCSACLQECLKPKKPVCGVCR. Cys91 and Cys94 together coordinate Zn(2+). The C2HC RNF-type zinc finger occupies 91 to 110; sequence CHGCRKNFFLSKIRAHVATC. At Lys102 the chain carries N6-acetyllysine. Positions 106 and 110 each coordinate Zn(2+). Lys112 is subject to N6-acetyllysine.

As to quaternary structure, interacts with XAF1, the interaction increases XAF1 stability and proapoptotic effects, and may regulate IFN signaling. Post-translationally, autoubiquitinated. Polyubiquitinated in the presence of E2 enzymes UBE2D1, UBE2D2 and UBE2D3, but only monoubiquitinated in the presence of UBE2E1.

It is found in the cytoplasm. Its subcellular location is the nucleus. The enzyme catalyses S-ubiquitinyl-[E2 ubiquitin-conjugating enzyme]-L-cysteine + [acceptor protein]-L-lysine = [E2 ubiquitin-conjugating enzyme]-L-cysteine + N(6)-ubiquitinyl-[acceptor protein]-L-lysine.. The protein operates within protein modification; protein ubiquitination. Its function is as follows. E3 ubiquitin-protein ligase that promotes the ubiquitination of various substrates. In turn, participates in the regulation of many biological processes including cell cycle, apoptosis, osteoclastogenesis as well as innate or adaptive immunity. Acts as negative regulator of NF-kappa-B-dependent transcription by promoting the ubiquitination and stabilization of the NF-kappa-B inhibitor TNFAIP3. May promote the ubiquitination of TRAF6 as well. Also acts as a negative regulator of T-cell activation. Inhibits cellular dsRNA responses and interferon production by targeting MAVS component for proteasomal degradation. Ubiquitinates the CDK inhibitor CDKN1A leading to its degradationand probably also CDKN1B and CDKN1C. This activity stimulates cell cycle G1-to-S phase transition and suppresses cellular senescence. May play a role in spermatogenesis. Inhibits classical swine fever virus replication by mediating 'K27'-linked ubiquitination of viral NS4B and inducing its degradation via the proteasome. The sequence is that of E3 ubiquitin-protein ligase RNF114 (RNF114) from Sus scrofa (Pig).